A 101-amino-acid chain; its full sequence is Small ribosomal subunit protein uS14 (101 aa).

This sequence belongs to the universal ribosomal protein uS14 family. Part of the 30S ribosomal subunit. Contacts proteins S3 and S10.

Functionally, binds 16S rRNA, required for the assembly of 30S particles and may also be responsible for determining the conformation of the 16S rRNA at the A site. The sequence is that of Small ribosomal subunit protein uS14 from Sodalis glossinidius (strain morsitans).